Consider the following 477-residue polypeptide: Aspartyl/glutamyl-tRNA(Asn/Gln) amidotransferase subunit B (477 aa).

Belongs to the GatB/GatE family. GatB subfamily. In terms of assembly, heterotrimer of A, B and C subunits.

The catalysed reaction is L-glutamyl-tRNA(Gln) + L-glutamine + ATP + H2O = L-glutaminyl-tRNA(Gln) + L-glutamate + ADP + phosphate + H(+). It catalyses the reaction L-aspartyl-tRNA(Asn) + L-glutamine + ATP + H2O = L-asparaginyl-tRNA(Asn) + L-glutamate + ADP + phosphate + 2 H(+). Its function is as follows. Allows the formation of correctly charged Asn-tRNA(Asn) or Gln-tRNA(Gln) through the transamidation of misacylated Asp-tRNA(Asn) or Glu-tRNA(Gln) in organisms which lack either or both of asparaginyl-tRNA or glutaminyl-tRNA synthetases. The reaction takes place in the presence of glutamine and ATP through an activated phospho-Asp-tRNA(Asn) or phospho-Glu-tRNA(Gln). The polypeptide is Aspartyl/glutamyl-tRNA(Asn/Gln) amidotransferase subunit B (Thioalkalivibrio sulfidiphilus (strain HL-EbGR7)).